Here is a 212-residue protein sequence, read N- to C-terminus: Thiamine-phosphate synthase (212 aa).

38-42 (QLREK) is a 4-amino-2-methyl-5-(diphosphooxymethyl)pyrimidine binding site. Mg(2+) contacts are provided by Asp71 and Asp90. Lys138 serves as a coordination point for 4-amino-2-methyl-5-(diphosphooxymethyl)pyrimidine. A 2-[(2R,5Z)-2-carboxy-4-methylthiazol-5(2H)-ylidene]ethyl phosphate-binding site is contributed by Gly166.

It belongs to the thiamine-phosphate synthase family. Requires Mg(2+) as cofactor.

The catalysed reaction is 2-[(2R,5Z)-2-carboxy-4-methylthiazol-5(2H)-ylidene]ethyl phosphate + 4-amino-2-methyl-5-(diphosphooxymethyl)pyrimidine + 2 H(+) = thiamine phosphate + CO2 + diphosphate. It catalyses the reaction 2-(2-carboxy-4-methylthiazol-5-yl)ethyl phosphate + 4-amino-2-methyl-5-(diphosphooxymethyl)pyrimidine + 2 H(+) = thiamine phosphate + CO2 + diphosphate. It carries out the reaction 4-methyl-5-(2-phosphooxyethyl)-thiazole + 4-amino-2-methyl-5-(diphosphooxymethyl)pyrimidine + H(+) = thiamine phosphate + diphosphate. The protein operates within cofactor biosynthesis; thiamine diphosphate biosynthesis; thiamine phosphate from 4-amino-2-methyl-5-diphosphomethylpyrimidine and 4-methyl-5-(2-phosphoethyl)-thiazole: step 1/1. Its function is as follows. Condenses 4-methyl-5-(beta-hydroxyethyl)thiazole monophosphate (THZ-P) and 2-methyl-4-amino-5-hydroxymethyl pyrimidine pyrophosphate (HMP-PP) to form thiamine monophosphate (TMP). This Chlamydia caviae (strain ATCC VR-813 / DSM 19441 / 03DC25 / GPIC) (Chlamydophila caviae) protein is Thiamine-phosphate synthase.